We begin with the raw amino-acid sequence, 239 residues long: Tetraspanin-9 (239 aa).

Residues 1–13 lie on the Cytoplasmic side of the membrane; that stretch reads MARGCLCCLKYMM. The chain crosses the membrane as a helical span at residues 14–34; it reads FLFNLIFWLCGCGLLGVGIWL. Over 35–55 the chain is Extracellular; that stretch reads SVSQGNFATFSPSFPSLSAAN. The helical transmembrane segment at 56-76 threads the bilayer; it reads LVIVIGTVVMVTGFLGCLGAI. The Cytoplasmic portion of the chain corresponds to 77–85; the sequence is KENKCLLLS. Residues 86-106 form a helical membrane-spanning segment; the sequence is FFIILLIILLTELILLILFFV. The Extracellular segment spans residues 107 to 203; sequence YMDKVNENAK…VKMWFDDNKH (97 aa). Asn-180 carries N-linked (GlcNAc...) asparagine glycosylation. Residues 204–224 traverse the membrane as a helical segment; the sequence is VLGTIGMCILIIQILGMAFSM. Residues 225-239 are Cytoplasmic-facing; sequence TLFQQIHRTGKKYDA.

It belongs to the tetraspanin (TM4SF) family.

The protein resides in the membrane. The sequence is that of Tetraspanin-9 (tspan9) from Xenopus laevis (African clawed frog).